A 541-amino-acid chain; its full sequence is MHHHPITLLSLLLGAAQSIAAHPTAHDERRSSSSIGVSASVPDDAALPVLHPFVSFSIEFAFFPDFAGNLSHPNLFSNQLLDNLADLQGAKPYIRVGGNTQDFALYDPKLRAATNATYITSISTDYPLILSFGPAFFESYFTWPGTKFIHGFNLGKNSSSDIELMLESVPLACKALEGGKLAYWELGNEPDLYKTSAQGIRRPASWTEQDYVDEWLNKTARIEKRLVEACPELAESKYIAPSFAGVTNSLNPVVTWEKGLDKSRNIALNSEHNYIGGATQPGVTLQNTLMNHTKTVESVAQQVNVSRILSKDNLTPGIPYILGETNSLYNEGAPGLSNSFGAALWGVDFNLYCASQNIRRTHMHQGSNYNYISWQPVGTNRTTIGTKAPYYGNAMVAAMLHGGDDVRIVNLPLAADTEAAYAAYVNETLVRVAVINLVEFNYTSTDSTAEKVESRPSAKYTFQLPSSESVYAGSVSVQRLMANGSNAITGITWDGWSYNYELAQGKPVRLQNVTTGEAISVGDDGVVEIEIPYSSAAILSL.

The signal sequence occupies residues 1–20 (MHHHPITLLSLLLGAAQSIA). N-linked (GlcNAc...) asparagine glycosylation is found at N69, N115, and N157. The active-site Proton donor is the E208. N-linked (GlcNAc...) asparagine glycosylation is found at N217, N291, and N304. E324 (nucleophile) is an active-site residue. 5 N-linked (GlcNAc...) asparagine glycosylation sites follow: N380, N426, N441, N483, and N512.

It belongs to the glycosyl hydrolase 79 family. N-glycosylated.

The protein resides in the secreted. It carries out the reaction a beta-D-glucuronoside + H2O = D-glucuronate + an alcohol. Functionally, beta-glucuronidase that hydrolyzes beta-glucuronosyl and 4-O-methyl-beta-glucuronosyl residues of arabinogalactan-protein. Hydrolyzed heparan sulfate only very weakly. Has no activity on xylan from birchwood. Able to catalyze the transglycosylation of glucuronic acid (GlcA) residues from p-nitrophenyl-beta-glucuronic acid (PNP beta-GlcA) to various monosaccharide acceptors such as glucose, galactose and xylose. The chain is Beta-glucuronidase from Aspergillus niger (strain ATCC MYA-4892 / CBS 513.88 / FGSC A1513).